A 67-amino-acid chain; its full sequence is uncharacterized protein (67 aa).

This is an uncharacterized protein from Thermoproteus tenax virus 1 (strain KRA1) (TTV1).